Consider the following 436-residue polypeptide: 3-ketoacyl-CoA thiolase (436 aa).

The Acyl-thioester intermediate role is filled by C99. Residues H392 and C422 each act as proton acceptor in the active site.

The protein belongs to the thiolase-like superfamily. Thiolase family. As to quaternary structure, heterotetramer of two alpha chains (FadJ) and two beta chains (FadI).

The protein localises to the cytoplasm. The catalysed reaction is an acyl-CoA + acetyl-CoA = a 3-oxoacyl-CoA + CoA. It participates in lipid metabolism; fatty acid beta-oxidation. Its function is as follows. Catalyzes the final step of fatty acid oxidation in which acetyl-CoA is released and the CoA ester of a fatty acid two carbons shorter is formed. This Alteromonas mediterranea (strain DSM 17117 / CIP 110805 / LMG 28347 / Deep ecotype) protein is 3-ketoacyl-CoA thiolase.